The primary structure comprises 838 residues: DNA gyrase subunit A (838 aa).

The Topo IIA-type catalytic domain occupies 41–510 (LPEVRDGLKP…ADGDVSDEDL (470 aa)). The active-site O-(5'-phospho-DNA)-tyrosine intermediate is the tyrosine 129. Positions 537 to 543 (QKRGGKG) match the GyrA-box motif.

The protein belongs to the type II topoisomerase GyrA/ParC subunit family. In terms of assembly, heterotetramer, composed of two GyrA and two GyrB chains. In the heterotetramer, GyrA contains the active site tyrosine that forms a transient covalent intermediate with DNA, while GyrB binds cofactors and catalyzes ATP hydrolysis.

Its subcellular location is the cytoplasm. The enzyme catalyses ATP-dependent breakage, passage and rejoining of double-stranded DNA.. A type II topoisomerase that negatively supercoils closed circular double-stranded (ds) DNA in an ATP-dependent manner to modulate DNA topology and maintain chromosomes in an underwound state. Negative supercoiling favors strand separation, and DNA replication, transcription, recombination and repair, all of which involve strand separation. Also able to catalyze the interconversion of other topological isomers of dsDNA rings, including catenanes and knotted rings. Type II topoisomerases break and join 2 DNA strands simultaneously in an ATP-dependent manner. The chain is DNA gyrase subunit A from Mycobacterium tuberculosis (strain CDC 1551 / Oshkosh).